We begin with the raw amino-acid sequence, 227 residues long: Cytochrome c oxidase subunit 2 (227 aa).

Topologically, residues 1 to 14 (MAHAVQYGFQDAAA) are mitochondrial intermembrane. Residues 15–45 (PIMEELLYFHDHTLMIVFMISSLVLYIISLM) traverse the membrane as a helical segment. Over 46 to 59 (LSTELTHTSTMDAQ) the chain is Mitochondrial matrix. The chain crosses the membrane as a helical span at residues 60–87 (EVETVWTILPAVILILIALPSLRILYMM). Residues 88-227 (DEIETPSLTL…YFEEWLLKTL (140 aa)) are Mitochondrial intermembrane-facing. The Cu cation site is built by histidine 161, cysteine 196, glutamate 198, cysteine 200, histidine 204, and methionine 207. Glutamate 198 is a Mg(2+) binding site. Tyrosine 218 is subject to Phosphotyrosine.

It belongs to the cytochrome c oxidase subunit 2 family. As to quaternary structure, component of the cytochrome c oxidase (complex IV, CIV), a multisubunit enzyme composed of 14 subunits. The complex is composed of a catalytic core of 3 subunits MT-CO1, MT-CO2 and MT-CO3, encoded in the mitochondrial DNA, and 11 supernumerary subunits COX4I, COX5A, COX5B, COX6A, COX6B, COX6C, COX7A, COX7B, COX7C, COX8 and NDUFA4, which are encoded in the nuclear genome. The complex exists as a monomer or a dimer and forms supercomplexes (SCs) in the inner mitochondrial membrane with NADH-ubiquinone oxidoreductase (complex I, CI) and ubiquinol-cytochrome c oxidoreductase (cytochrome b-c1 complex, complex III, CIII), resulting in different assemblies (supercomplex SCI(1)III(2)IV(1) and megacomplex MCI(2)III(2)IV(2)). Found in a complex with TMEM177, COA6, COX18, COX20, SCO1 and SCO2. Interacts with TMEM177 in a COX20-dependent manner. Interacts with COX20. Interacts with COX16. It depends on Cu cation as a cofactor.

The protein localises to the mitochondrion inner membrane. It carries out the reaction 4 Fe(II)-[cytochrome c] + O2 + 8 H(+)(in) = 4 Fe(III)-[cytochrome c] + 2 H2O + 4 H(+)(out). Functionally, component of the cytochrome c oxidase, the last enzyme in the mitochondrial electron transport chain which drives oxidative phosphorylation. The respiratory chain contains 3 multisubunit complexes succinate dehydrogenase (complex II, CII), ubiquinol-cytochrome c oxidoreductase (cytochrome b-c1 complex, complex III, CIII) and cytochrome c oxidase (complex IV, CIV), that cooperate to transfer electrons derived from NADH and succinate to molecular oxygen, creating an electrochemical gradient over the inner membrane that drives transmembrane transport and the ATP synthase. Cytochrome c oxidase is the component of the respiratory chain that catalyzes the reduction of oxygen to water. Electrons originating from reduced cytochrome c in the intermembrane space (IMS) are transferred via the dinuclear copper A center (CU(A)) of subunit 2 and heme A of subunit 1 to the active site in subunit 1, a binuclear center (BNC) formed by heme A3 and copper B (CU(B)). The BNC reduces molecular oxygen to 2 water molecules using 4 electrons from cytochrome c in the IMS and 4 protons from the mitochondrial matrix. The polypeptide is Cytochrome c oxidase subunit 2 (MT-CO2) (Galago senegalensis (Northern lesser bushbaby)).